Consider the following 412-residue polypeptide: MAASIFAAVPRAPPVAVFKLTADFREDGDSRKVNLGVGAYRTDEGQPWVLPVVRKVEQLIAGDGSLNHEYLPILGLPEFRANASRIALGDDSPAIAQKRVGSVQGLGGTGALRIGAEFLRRWYNGNNNTATPVYVSSPTWENHNSVFMDAGFKDIRTYRYWDAAKRGLDLQGLLDDMEKAPEFSIFILHACAHNPTGTDPTPDEWKQIAAVMKRRCLFPFFDSAYQGFASGSLDKDAWAVRYFVSEGFELFCAQSFSKNFGLYNERVGNLSVVGKDEDNVQRVLSQMEKIVRTTWSNPPSQGARIVATTLTSPQLFAEWKDNVKTMADRVLLMRSELRSRLESLGTPGTWNHITDQIGMFSFTGLNPKQVEYMIKEKHIYLMASGRINMCGLTTKNLDYVAKSIHEAVTKIQ.

Residue Ala-2 is modified to N-acetylalanine. Residues Gly-38, Trp-140, and Asn-194 each contribute to the L-aspartate site. Position 258 is an N6-(pyridoxal phosphate)lysine (Lys-258). Arg-386 is a binding site for L-aspartate.

It belongs to the class-I pyridoxal-phosphate-dependent aminotransferase family. Homodimer. Pyridoxal 5'-phosphate is required as a cofactor.

The protein localises to the cytoplasm. The catalysed reaction is L-aspartate + 2-oxoglutarate = oxaloacetate + L-glutamate. The enzyme catalyses L-cysteine + 2-oxoglutarate = 2-oxo-3-sulfanylpropanoate + L-glutamate. It carries out the reaction (2S)-2-aminobutanoate + 2-oxoglutarate = 2-oxobutanoate + L-glutamate. It catalyses the reaction 3-sulfino-L-alanine + 2-oxoglutarate = 3-sulfinopyruvate + L-glutamate. Functionally, biosynthesis of L-glutamate from L-aspartate or L-cysteine. Important regulator of levels of glutamate, the major excitatory neurotransmitter of the vertebrate central nervous system. Acts as a scavenger of glutamate in brain neuroprotection. The aspartate aminotransferase activity is involved in hepatic glucose synthesis during development and in adipocyte glyceroneogenesis. Using L-cysteine as substrate, regulates levels of mercaptopyruvate, an important source of hydrogen sulfide. Mercaptopyruvate is converted into H(2)S via the action of 3-mercaptopyruvate sulfurtransferase (3MST). Hydrogen sulfide is an important synaptic modulator and neuroprotectant in the brain. The sequence is that of Aspartate aminotransferase, cytoplasmic from Gallus gallus (Chicken).